The sequence spans 377 residues: Lactosylceramide 1,3-N-acetyl-beta-D-glucosaminyltransferase (377 aa).

The Cytoplasmic segment spans residues methionine 1–glutamine 14. A helical; Signal-anchor for type II membrane protein transmembrane segment spans residues phenylalanine 15–asparagine 35. Topologically, residues asparagine 36–alanine 377 are lumenal. N-linked (GlcNAc...) asparagine glycosylation occurs at asparagine 58.

Belongs to the glycosyltransferase 31 family.

Its subcellular location is the golgi apparatus membrane. It catalyses the reaction a beta-D-Gal-(1-&gt;4)-beta-D-Glc-(1&lt;-&gt;1)-Cer(d18:1(4E)) + UDP-N-acetyl-alpha-D-glucosamine = a beta-D-GlcNAc-(1-&gt;3)-beta-D-Gal-(1-&gt;4)-beta-D-Glc-(1&lt;-&gt;1)-Cer(d18:1(4E)) + UDP + H(+). It carries out the reaction a neolactoside nLc4Cer(d18:1(4E)) + UDP-N-acetyl-alpha-D-glucosamine = a neolactoside IV(3)-beta-GlcNAc-nLc4Cer(d18:1(4E)) + UDP + H(+). Its pathway is protein modification; protein glycosylation. Its function is as follows. Beta-1,3-N-acetylglucosaminyltransferase that plays a key role in the synthesis of lacto- or neolacto-series carbohydrate chains on glycolipids, notably by participating in biosynthesis of HNK-1 and Lewis X carbohydrate structures. Has strong activity toward lactosylceramide (LacCer) and neolactotetraosylceramide (nLc(4)Cer; paragloboside), resulting in the synthesis of Lc(3)Cer and neolactopentaosylceramide (nLc(5)Cer), respectively. Probably plays a central role in regulating neolacto-series glycolipid synthesis during embryonic development. This is Lactosylceramide 1,3-N-acetyl-beta-D-glucosaminyltransferase from Rattus norvegicus (Rat).